Consider the following 83-residue polypeptide: Large ribosomal subunit protein eL43 (83 aa).

Residues C38, C41, C56, and C59 each contribute to the Zn(2+) site. The C4-type zinc-finger motif lies at 38–59 (CKKCGKKAVKRSGTGIWECRHC).

The protein belongs to the eukaryotic ribosomal protein eL43 family. Putative zinc-binding subfamily. Part of the 50S ribosomal subunit. Requires Zn(2+) as cofactor.

In terms of biological role, binds to the 23S rRNA. The sequence is that of Large ribosomal subunit protein eL43 from Archaeoglobus fulgidus (strain ATCC 49558 / DSM 4304 / JCM 9628 / NBRC 100126 / VC-16).